We begin with the raw amino-acid sequence, 393 residues long: S-adenosylmethionine synthase 3 (393 aa).

Glutamate 9 contacts Mg(2+). Histidine 15 serves as a coordination point for ATP. Glutamate 43 is a K(+) binding site. L-methionine-binding residues include glutamate 56 and glutamine 99. ATP is bound by residues 167 to 169 (NGK), 235 to 238 (SGRF), aspartate 246, 252 to 253 (RK), alanine 269, lysine 273, and lysine 277. Aspartate 246 lines the L-methionine pocket. Residue lysine 277 participates in L-methionine binding.

This sequence belongs to the AdoMet synthase family. As to quaternary structure, homotetramer. The cofactor is Mn(2+). Requires Mg(2+) as cofactor. Co(2+) serves as cofactor. K(+) is required as a cofactor. Mostly expressed in flowers, seedpods and roots, and, to a lower extent, in stems and leaves.

The protein resides in the cytoplasm. It catalyses the reaction L-methionine + ATP + H2O = S-adenosyl-L-methionine + phosphate + diphosphate. It functions in the pathway amino-acid biosynthesis; S-adenosyl-L-methionine biosynthesis; S-adenosyl-L-methionine from L-methionine: step 1/1. In terms of biological role, catalyzes the formation of S-adenosylmethionine from methionine and ATP. The reaction comprises two steps that are both catalyzed by the same enzyme: formation of S-adenosylmethionine (AdoMet) and triphosphate, and subsequent hydrolysis of the triphosphate. This chain is S-adenosylmethionine synthase 3 (MSAMS3), found in Brassica juncea (Indian mustard).